Consider the following 271-residue polypeptide: Phosphonoacetaldehyde hydrolase (271 aa).

The active-site Nucleophile is the D12. Mg(2+) is bound by residues D12 and A14. K54 acts as the Schiff-base intermediate with substrate in catalysis. A Mg(2+)-binding site is contributed by D188.

Belongs to the HAD-like hydrolase superfamily. PhnX family. As to quaternary structure, homodimer. The cofactor is Mg(2+).

The enzyme catalyses phosphonoacetaldehyde + H2O = acetaldehyde + phosphate + H(+). Functionally, involved in phosphonate degradation. The sequence is that of Phosphonoacetaldehyde hydrolase from Vibrio campbellii (strain ATCC BAA-1116).